A 130-amino-acid chain; its full sequence is Small ribosomal subunit protein uS11c (130 aa).

The protein belongs to the universal ribosomal protein uS11 family. Part of the 30S ribosomal subunit.

It localises to the plastid. The protein localises to the chloroplast. The sequence is that of Small ribosomal subunit protein uS11c from Psilotum nudum (Whisk fern).